The primary structure comprises 177 residues: Ribulose bisphosphate carboxylase small subunit, chloroplastic 2 (177 aa).

The transit peptide at 1 to 56 directs the protein to the chloroplast; the sequence is MASSMMASTAAVARAGPAQSNMVAPFNGLRSSVAFPATRKANKNLSTLPSNGGKVS.

This sequence belongs to the RuBisCO small chain family. Heterohexadecamer of 8 large and 8 small subunits.

It is found in the plastid. Its subcellular location is the chloroplast. Its function is as follows. RuBisCO catalyzes two reactions: the carboxylation of D-ribulose 1,5-bisphosphate, the primary event in carbon dioxide fixation, as well as the oxidative fragmentation of the pentose substrate. Both reactions occur simultaneously and in competition at the same active site. Although the small subunit is not catalytic it is essential for maximal activity. The chain is Ribulose bisphosphate carboxylase small subunit, chloroplastic 2 from Lemna gibba (Swollen duckweed).